We begin with the raw amino-acid sequence, 139 residues long: Large ribosomal subunit protein bL21 (139 aa).

The protein belongs to the bacterial ribosomal protein bL21 family. Part of the 50S ribosomal subunit. Contacts protein L20.

Its function is as follows. This protein binds to 23S rRNA in the presence of protein L20. The sequence is that of Large ribosomal subunit protein bL21 from Prochlorococcus marinus (strain NATL2A).